Reading from the N-terminus, the 82-residue chain is Neuropeptide-like peptide 36 (82 aa).

This is Neuropeptide-like peptide 36 (nlp-36) from Caenorhabditis elegans.